A 50-amino-acid chain; its full sequence is Large ribosomal subunit protein bL33 (50 aa).

It belongs to the bacterial ribosomal protein bL33 family.

The sequence is that of Large ribosomal subunit protein bL33 from Sulfurovum sp. (strain NBC37-1).